Here is a 608-residue protein sequence, read N- to C-terminus: MSGPLDRFTSPCFSNNGEKREKKSDFEVSEDEKKTRIGGILKKKSSKSKFRHSLKRRGSRSIDRTLSLTFEDIHDAEELRYVSEFRQSLISDHLLPPNLDDYHIMLRFLFARKFDLGKAKLMWTNMIQWRRDFGTDTILEDFEFPELDEVLRYYPQGYHGVDKEGRPVYIERLGKVDASKLMQVTTLERYLRYHVKEFEKTITVKFPACCIAAKRHIDSSTTILDVQGLGLKNFTKTARDLIIQLQKIDSDNYPETLHRMFIINAGSGFKLLWGTVKSFLDPKTVSKIHVLGNKYQNKLLEMIDASQLPDFFGGTCTCADQGGCMRSDKGPWKDSEILKMGRSGGTFCRHAGAFLSSDSQISSSDKPTYSLKVSDTSTAKSGSELEEMASPKTNTNNHVPKLTPVSEYANGNISPTVLSEYEECVPMVDKVVDVAWQLQEMPNASEGPQYTSSLGKIGSVRHIWSWLTAFFISFFTLLASLALPQTKEHSQLHSSSVRAELCDERIARESRPPSPPRSTITERVIISSVLSRLGDLEKQIENLHSRKSEMPHEKEELLNAAVYRVDALEAELITTKKALHEALIRQEELLGYIDRQKEAKCRRKKFCW.

A disordered region spans residues 1 to 33 (MSGPLDRFTSPCFSNNGEKREKKSDFEVSEDEK). Basic and acidic residues predominate over residues 17–33 (GEKREKKSDFEVSEDEK). The CRAL-TRIO domain occupies 146–320 (ELDEVLRYYP…FFGGTCTCAD (175 aa)). Residues 358-403 (DSQISSSDKPTYSLKVSDTSTAKSGSELEEMASPKTNTNNHVPKLT) form a disordered region. Residues 371 to 381 (LKVSDTSTAKS) are compositionally biased toward polar residues. Residues 526 to 572 (ISSVLSRLGDLEKQIENLHSRKSEMPHEKEELLNAAVYRVDALEAEL) adopt a coiled-coil conformation.

The protein belongs to the SFH family.

It is found in the golgi apparatus membrane. Its subcellular location is the cell membrane. In terms of biological role, required for transport of secretory proteins from the Golgi complex. Catalyzes the transfer of phosphatidylinositol and phosphatidylcholine between membranes in vitro. This chain is Phosphatidylinositol/phosphatidylcholine transfer protein SFH4 (SFH4), found in Arabidopsis thaliana (Mouse-ear cress).